The primary structure comprises 446 residues: Probable arogenate/prephenate dehydrogenase (446 aa).

The Prephenate/arogenate dehydrogenase domain maps to 6–288; that stretch reads LTISIIGGTD…SEAKRGAYYS (283 aa).

This sequence in the N-terminal section; belongs to the prephenate/arogenate dehydrogenase family.

The sequence is that of Probable arogenate/prephenate dehydrogenase from Methanocaldococcus jannaschii (strain ATCC 43067 / DSM 2661 / JAL-1 / JCM 10045 / NBRC 100440) (Methanococcus jannaschii).